A 351-amino-acid polypeptide reads, in one-letter code: Large ribosomal subunit protein uL3 (351 aa).

2 disordered regions span residues 1-31 and 246-271; these read MGHR…TPRT and KGSR…GQLG.

This sequence belongs to the universal ribosomal protein uL3 family. As to quaternary structure, part of the 50S ribosomal subunit. Forms a cluster with proteins L14 and L24e.

Its function is as follows. One of the primary rRNA binding proteins, it binds directly near the 3'-end of the 23S rRNA, where it nucleates assembly of the 50S subunit. In Saccharolobus islandicus (strain Y.N.15.51 / Yellowstone #2) (Sulfolobus islandicus), this protein is Large ribosomal subunit protein uL3.